A 51-amino-acid polypeptide reads, in one-letter code: Mitochondrial import receptor subunit TOM5 homolog (51 aa).

Methionine 1 is modified (N-acetylmethionine). Lysine 10 participates in a covalent cross-link: Glycyl lysine isopeptide (Lys-Gly) (interchain with G-Cter in SUMO2). Residues 27 to 45 form a helical membrane-spanning segment; sequence SIRNFLIYVALLRVTPFIL.

It belongs to the Tom5 family. In terms of assembly, forms part of the preprotein translocase complex of the outer mitochondrial membrane (TOM complex) which consists of at least 7 different proteins (TOMM5, TOMM6, TOMM7, TOMM20, TOMM22, TOMM40 and TOMM70).

It is found in the mitochondrion outer membrane. This Bos taurus (Bovine) protein is Mitochondrial import receptor subunit TOM5 homolog.